The chain runs to 273 residues: Small ribosomal subunit protein uS3 (273 aa).

One can recognise a KH type-2 domain in the interval 43–111 (IRQLMSTGME…QVQLNILEVK (69 aa)). Residues 218–227 (QQAAAAPSRG) show a composition bias toward low complexity. Residues 218-273 (QQAAAAPSRGRAGDRPGRPGGDRRRRNDRPAAEAAPAAVEAPAAEAAAPAAEGGQA) are disordered. Residues 228 to 239 (RAGDRPGRPGGD) show a composition bias toward basic and acidic residues. Low complexity predominate over residues 249–273 (AEAAPAAVEAPAAEAAAPAAEGGQA).

The protein belongs to the universal ribosomal protein uS3 family. Part of the 30S ribosomal subunit. Forms a tight complex with proteins S10 and S14.

Binds the lower part of the 30S subunit head. Binds mRNA in the 70S ribosome, positioning it for translation. In Paenarthrobacter aurescens (strain TC1), this protein is Small ribosomal subunit protein uS3.